Here is a 555-residue protein sequence, read N- to C-terminus: Potassium-transporting ATPase potassium-binding subunit (555 aa).

10 helical membrane passes run Ile-2–Ile-22, Gln-60–Phe-80, Ile-130–Phe-150, Val-173–Thr-193, Met-246–Tyr-266, Ile-278–Glu-298, Ala-374–Val-394, Leu-412–Leu-432, Leu-483–Leu-503, and Gly-525–Leu-545.

It belongs to the KdpA family. As to quaternary structure, the system is composed of three essential subunits: KdpA, KdpB and KdpC.

The protein resides in the cell membrane. Functionally, part of the high-affinity ATP-driven potassium transport (or Kdp) system, which catalyzes the hydrolysis of ATP coupled with the electrogenic transport of potassium into the cytoplasm. This subunit binds the extracellular potassium ions and delivers the ions to the membrane domain of KdpB through an intramembrane tunnel. The chain is Potassium-transporting ATPase potassium-binding subunit from Bacillus cereus (strain AH820).